Reading from the N-terminus, the 95-residue chain is Small ubiquitin-related modifier 2-B (95 aa).

A Glycyl lysine isopeptide (Lys-Gly) (interchain with G-Cter in SUMO) cross-link involves residue Lys-11. Residues 16-95 form the Ubiquitin-like domain; sequence DHINLKVAGQ…VFQQQTGGSY (80 aa). Gly-93 participates in a covalent cross-link: Glycyl lysine isopeptide (Gly-Lys) (interchain with K-? in acceptor proteins). The propeptide occupies 94-95; sequence SY.

Belongs to the ubiquitin family. SUMO subfamily. As to quaternary structure, interacts with sae2 and ube2i. Covalently attached to a number of proteins, including top2. Post-translationally, polymeric chains can be formed through Lys-11 cross-linking. In terms of processing, cleavage of precursor form by a sentrin-specific protease is necessary for function.

The protein resides in the nucleus. Ubiquitin-like protein that can be covalently attached to proteins as a monomer or as a lysine-linked polymer. Covalent attachment via an isopeptide bond to its substrates requires prior activation by the E1 complex sae1-sae2 and linkage to the E2 enzyme ube2i, and can be promoted by an E3 ligase such as pias1-4. This post-translational modification on lysine residues of proteins plays a crucial role in a number of cellular processes such as nuclear transport, DNA replication and repair, mitosis and signal transduction. Polymeric sumo2 chains are also susceptible to polyubiquitination which functions as a signal for proteasomal degradation of modified proteins. The protein is Small ubiquitin-related modifier 2-B (sumo2-b) of Xenopus laevis (African clawed frog).